A 342-amino-acid polypeptide reads, in one-letter code: Anthranilate phosphoribosyltransferase (342 aa).

Residues Gly-83, 86 to 87 (GD), Thr-91, 93 to 96 (NIST), 111 to 119 (KHGNRGVSS), and Ser-123 each bind 5-phospho-alpha-D-ribose 1-diphosphate. Gly-83 serves as a coordination point for anthranilate. Position 95 (Ser-95) interacts with Mg(2+). Asn-114 is a binding site for anthranilate. Arg-169 contributes to the anthranilate binding site. Asp-228 and Glu-229 together coordinate Mg(2+).

Belongs to the anthranilate phosphoribosyltransferase family. In terms of assembly, homodimer. Requires Mg(2+) as cofactor.

The enzyme catalyses N-(5-phospho-beta-D-ribosyl)anthranilate + diphosphate = 5-phospho-alpha-D-ribose 1-diphosphate + anthranilate. It participates in amino-acid biosynthesis; L-tryptophan biosynthesis; L-tryptophan from chorismate: step 2/5. Catalyzes the transfer of the phosphoribosyl group of 5-phosphorylribose-1-pyrophosphate (PRPP) to anthranilate to yield N-(5'-phosphoribosyl)-anthranilate (PRA). This Paraburkholderia phymatum (strain DSM 17167 / CIP 108236 / LMG 21445 / STM815) (Burkholderia phymatum) protein is Anthranilate phosphoribosyltransferase.